The following is a 424-amino-acid chain: Acetyl-CoA acetyltransferase, mitochondrial (424 aa).

The transit peptide at 1-30 (MAALAVLHGVVRRPLLRGLLQEVRCLGRSY) directs the protein to the mitochondrion. Lys63 carries the post-translational modification N6-acetyllysine; alternate. Residue Lys63 is modified to N6-succinyllysine; alternate. N6-succinyllysine is present on Lys75. Cys123 acts as the Acyl-thioester intermediate in catalysis. Lys171, Lys178, Lys187, and Lys199 each carry N6-acetyllysine; alternate. 4 positions are modified to N6-succinyllysine; alternate: Lys171, Lys178, Lys187, and Lys199. Ser204 bears the Phosphoserine mark. Position 216 (Tyr216) interacts with CoA. Tyr216 contributes to the K(+) binding site. N6-acetyllysine; alternate is present on residues Lys220 and Lys227. Lys220 and Lys227 each carry N6-succinyllysine; alternate. Lys240 is modified (N6-succinyllysine). Lys242 carries the post-translational modification N6-acetyllysine; alternate. The residue at position 242 (Lys242) is an N6-succinyllysine; alternate. 2 positions are modified to N6-acetyllysine: Lys248 and Lys254. Residues 255-257 (RVD) and Lys260 each bind CoA. Lys260 bears the N6-acetyllysine; alternate mark. Lys260 carries the post-translational modification N6-succinyllysine; alternate. N6-succinyllysine occurs at positions 263 and 265. Lys270 is subject to N6-acetyllysine. K(+) contacts are provided by Ala277, Ala278, and Ala280. Ser281 lines the CoA pocket. Lys335 carries the post-translational modification N6-acetyllysine. K(+) is bound at residue Val378. The Proton donor/acceptor role is filled by Cys410.

Belongs to the thiolase-like superfamily. Thiolase family. Homotetramer. Post-translationally, succinylation at Lys-265, adjacent to a coenzyme A binding site. Desuccinylated by SIRT5.

It localises to the mitochondrion. It catalyses the reaction 2 acetyl-CoA = acetoacetyl-CoA + CoA. The enzyme catalyses propanoyl-CoA + acetyl-CoA = 2-methyl-3-oxobutanoyl-CoA + CoA. Its pathway is lipid metabolism; fatty acid beta-oxidation. Activated by potassium ions, but not sodium ions. Functionally, this is one of the enzymes that catalyzes the last step of the mitochondrial beta-oxidation pathway, an aerobic process breaking down fatty acids into acetyl-CoA. Using free coenzyme A/CoA, catalyzes the thiolytic cleavage of medium- to long-chain 3-oxoacyl-CoAs into acetyl-CoA and a fatty acyl-CoA shortened by two carbon atoms. The activity of the enzyme is reversible and it can also catalyze the condensation of two acetyl-CoA molecules into acetoacetyl-CoA. Thereby, it plays a major role in ketone body metabolism. This Rattus norvegicus (Rat) protein is Acetyl-CoA acetyltransferase, mitochondrial (Acat1).